The chain runs to 590 residues: Membrane protein insertase YidC (590 aa).

5 helical membrane-spanning segments follow: residues 5–25 (SVIGFALIAAIMIVWLQFMKP), 368–388 (GLIIIIFAFLIKLVTWPLSLA), 433–453 (LGGCLPTVIQMPLLFAMFYVF), 483–503 (LPLYGDHIAIMPILMAVTVFF), and 519–539 (IMMWLFPAMMLFFFNNMPAGL).

The protein belongs to the OXA1/ALB3/YidC family. Type 1 subfamily. In terms of assembly, interacts with the Sec translocase complex via SecD. Specifically interacts with transmembrane segments of nascent integral membrane proteins during membrane integration.

Its subcellular location is the cell inner membrane. Required for the insertion and/or proper folding and/or complex formation of integral membrane proteins into the membrane. Involved in integration of membrane proteins that insert both dependently and independently of the Sec translocase complex, as well as at least some lipoproteins. Aids folding of multispanning membrane proteins. The sequence is that of Membrane protein insertase YidC from Chlorobaculum tepidum (strain ATCC 49652 / DSM 12025 / NBRC 103806 / TLS) (Chlorobium tepidum).